The chain runs to 83 residues: Small proline-rich protein 2A3 (83 aa).

A run of 5 repeats spans residues 21-29 (PKCPEPCPP), 30-38 (QVWPGPCRP), 39-47 (VMCFEPCLP), 48-56 (SVWPGPCRP), and 57-65 (VVCYEQCPP). The tract at residues 21 to 65 (PKCPEPCPPQVWPGPCRPVMCFEPCLPSVWPGPCRPVVCYEQCPP) is 5 X 9 AA approximate tandem repeats.

Belongs to the cornifin (SPRR) family. In terms of processing, forms five pairs of intrachain disulfide bonds.

The protein resides in the secreted. The protein localises to the extracellular space. It localises to the cytoplasmic vesicle. Its subcellular location is the secretory vesicle. Gut bactericidal protein that selectively kills Gram-positive bacteria by binding to negatively charged lipids on bacterial membranes, leading to bacterial membrane permeabilization and disruption. Specifically binds lipids bearing negatively charged headgroups, such as phosphatidic acid, phosphatidylserine (PS), cardiolipin (CL), and phosphatidylinositol phosphates, but not to zwitterionic or neutral lipids. Induced by type-2 cytokines in response to helminth infection and is required to protect against helminth-induced bacterial invasion of intestinal tissue. May also be involved in the development of the cornified envelope of squamous epithelia; however, additional evidences are required to confirm this result in vivo. The sequence is that of Small proline-rich protein 2A3 from Mus musculus (Mouse).